Consider the following 98-residue polypeptide: HssA/B-like protein 33 (98 aa).

Disordered stretches follow at residues 1–29 (MTLFSSISSMSSSMTSSRSSFSSFGSGTS) and 60–98 (AKSSGGSCGGKGGPHNHGHGNGHGPHGHGGKGSGGSCSC). A compositionally biased stretch (gly residues) spans 60 to 72 (AKSSGGSCGGKGG). Basic residues predominate over residues 73–88 (PHNHGHGNGHGPHGHG). The segment covering 89 to 98 (GKGSGGSCSC) has biased composition (gly residues).

Belongs to the hssA/B family.

The protein is HssA/B-like protein 33 (hssl33) of Dictyostelium discoideum (Social amoeba).